The primary structure comprises 324 residues: Thiamine thiazole synthase (324 aa).

Residues C86, 107 to 108 (EA), G115, and V180 contribute to the substrate site. C213 carries the post-translational modification 2,3-didehydroalanine (Cys). Residues D215, H230, M282, and 292 to 294 (RMG) each bind substrate.

This sequence belongs to the THI4 family. In terms of assembly, homooctamer. Fe cation is required as a cofactor. Post-translationally, during the catalytic reaction, a sulfide is transferred from Cys-213 to a reaction intermediate, generating a dehydroalanine residue.

It localises to the cytoplasm. The protein resides in the nucleus. It catalyses the reaction [ADP-thiazole synthase]-L-cysteine + glycine + NAD(+) = [ADP-thiazole synthase]-dehydroalanine + ADP-5-ethyl-4-methylthiazole-2-carboxylate + nicotinamide + 3 H2O + 2 H(+). Its function is as follows. Involved in biosynthesis of the thiamine precursor thiazole. Catalyzes the conversion of NAD and glycine to adenosine diphosphate 5-(2-hydroxyethyl)-4-methylthiazole-2-carboxylic acid (ADT), an adenylated thiazole intermediate. The reaction includes an iron-dependent sulfide transfer from a conserved cysteine residue of the protein to a thiazole intermediate. The enzyme can only undergo a single turnover, which suggests it is a suicide enzyme. May have additional roles in adaptation to various stress conditions and in DNA damage tolerance. This is Thiamine thiazole synthase (sti35) from Fusarium solani subsp. phaseoli (Nectria haematococca).